Reading from the N-terminus, the 624-residue chain is Carbon monoxide dehydrogenase (624 aa).

[4Fe-4S] cluster contacts are provided by cysteine 37, cysteine 46, cysteine 49, cysteine 54, and cysteine 65. Histidine 256, cysteine 292, cysteine 336, cysteine 444, cysteine 475, and cysteine 516 together coordinate [Ni-4Fe-5S] cluster.

Belongs to the Ni-containing carbon monoxide dehydrogenase family. In terms of assembly, homodimer. It depends on [4Fe-4S] cluster as a cofactor. The cofactor is [Ni-4Fe-5S] cluster.

The enzyme catalyses CO + 2 oxidized [2Fe-2S]-[ferredoxin] + H2O = 2 reduced [2Fe-2S]-[ferredoxin] + CO2 + 2 H(+). Its function is as follows. CODH oxidizes carbon monoxide coupled, via CooF, to the reduction of a hydrogen cation by a hydrogenase (possibly CooH). This chain is Carbon monoxide dehydrogenase (cooS), found in Methanocaldococcus jannaschii (strain ATCC 43067 / DSM 2661 / JAL-1 / JCM 10045 / NBRC 100440) (Methanococcus jannaschii).